A 598-amino-acid chain; its full sequence is Protein HIGH CHLOROPHYLL FLUORESCENCE PHENOTYPE 173, chloroplastic (598 aa).

The N-terminal 79 residues, 1-79 (MVGSIVGSNM…ITTKESEETV (79 aa)), are a transit peptide targeting the chloroplast. Residues 42 to 106 (VIPRAQSSSS…PTLKLDDVNP (65 aa)) are disordered. The segment covering 73-84 (KESEETVAKKLD) has biased composition (basic and acidic residues). Pro residues predominate over residues 87–97 (PPSPQSPPSPP).

The protein belongs to the NmrA-type oxidoreductase family. As to quaternary structure, component of a high molecular weight complex containing psbA mRNA, OHP1, OHP2 and HCF244, and PSII core proteins D1/D2, HCF136 and HCF173. Interacts with LPE1.

The protein localises to the plastid. The protein resides in the chloroplast membrane. Its subcellular location is the chloroplast thylakoid membrane. It localises to the chloroplast stroma. In terms of biological role, auxiliary factor required, together with HCF244, for the biogenesis of photosystem II (PSII), especially for the synthesis of the reaction center proteins (e.g. D1), via the regulation of the corresponding mRNA (e.g. psbA) translation initiation (ribosomal loading) and stabilization. The polypeptide is Protein HIGH CHLOROPHYLL FLUORESCENCE PHENOTYPE 173, chloroplastic (Arabidopsis thaliana (Mouse-ear cress)).